The chain runs to 610 residues: MSESFDASAFLKTVTSQPGVYRMYDAGNTVIYVGKAKDLKKRLASYFRSHVASRKTEALVKSIKHIDVTITHTETEALLLEHNYIKLYQPRYNVLLRDDKSYPMIFLSGDAHPRLTVHRGAKHAKGEYFGPFPNGNAVRETLILLQKLFPVRQCENSVYRNRSRPCLQYQIGRCLGPCVSGLVSEEDYRQQVEYVRLFLSGKDQQVLNQLISRMESASRDLRFEDAARIRDQIQAVRRVTEKQFVSGDGEDLDVISVAFDAGMACVYVLFIRQGKVLGSRSYFPKVPGGTELGEVVQTFVGQFYLQGNSGRTLPTEILLDFTLPDKDLLTESLTAVAGRKVQIQTKPRGDRARYLKLARTNAATALVTKLSQQSTIHQRLAALANVLQLPEIHRMECFDISHTMGEQTVASCVVFDANGPLRSEYRRYNISGITPGDDYAAMAQVLQRRYGKALDDSKIPDVIVIDGGKGQLGQAQAVFDSLQVSWDKNKPLLLGVAKGSDRKAGLETLFLEATGEGMALPADSPALHVIQHIRDDSHDHAIGGHRKKRAKVKNTSTLELIEGVGPKRRQTLLKYMGGLQPLMNASIEEIANVPGISHGLAEKIFHALKH.

The region spanning 16–94 (SQPGVYRMYD…IKLYQPRYNV (79 aa)) is the GIY-YIG domain. In terms of domain architecture, UVR spans 204-239 (QQVLNQLISRMESASRDLRFEDAARIRDQIQAVRRV).

It belongs to the UvrC family. Interacts with UvrB in an incision complex.

It is found in the cytoplasm. In terms of biological role, the UvrABC repair system catalyzes the recognition and processing of DNA lesions. UvrC both incises the 5' and 3' sides of the lesion. The N-terminal half is responsible for the 3' incision and the C-terminal half is responsible for the 5' incision. The chain is UvrABC system protein C from Pectobacterium atrosepticum (strain SCRI 1043 / ATCC BAA-672) (Erwinia carotovora subsp. atroseptica).